Consider the following 198-residue polypeptide: Molybdopterin synthase catalytic subunit (198 aa).

Substrate is bound by residues 107–108, K123, and 130–132; these read HR and KKE.

The protein belongs to the MoaE family. MOCS2B subfamily. As to quaternary structure, heterotetramer; composed of 2 small (MOCS2A) and 2 large (MOCS2B) subunits.

It localises to the cytoplasm. The enzyme catalyses 2 [molybdopterin-synthase sulfur-carrier protein]-C-terminal-Gly-aminoethanethioate + cyclic pyranopterin phosphate + H2O = molybdopterin + 2 [molybdopterin-synthase sulfur-carrier protein]-C-terminal Gly-Gly + 2 H(+). It participates in cofactor biosynthesis; molybdopterin biosynthesis. Catalytic subunit of the molybdopterin synthase complex, a complex that catalyzes the conversion of precursor Z into molybdopterin. Acts by mediating the incorporation of 2 sulfur atoms from thiocarboxylated MOCS2A into precursor Z to generate a dithiolene group. The protein is Molybdopterin synthase catalytic subunit of Arabidopsis thaliana (Mouse-ear cress).